The chain runs to 29 residues: Inorganic pyrophosphatase (29 aa).

The protein resides in the periplasm. It carries out the reaction diphosphate + H2O = 2 phosphate + H(+). Its function is as follows. Inorganic pyrophosphatase is an essential enzyme for the activation of sulfate by sulfate reducing bacteria. This is a high activity pyrophosphatase. The chain is Inorganic pyrophosphatase from Nitratidesulfovibrio vulgaris (strain ATCC 29579 / DSM 644 / CCUG 34227 / NCIMB 8303 / VKM B-1760 / Hildenborough) (Desulfovibrio vulgaris).